The following is a 298-amino-acid chain: Thymidylate synthase (298 aa).

Residues Arg-25 and 159–160 (RR) contribute to the dUMP site. The Nucleophile role is filled by Cys-179. DUMP is bound by residues 200–203 (RSCD), Asn-211, and 241–243 (HLY). Position 203 (Asp-203) interacts with (6R)-5,10-methylene-5,6,7,8-tetrahydrofolate. Ala-297 is a (6R)-5,10-methylene-5,6,7,8-tetrahydrofolate binding site.

It belongs to the thymidylate synthase family. Bacterial-type ThyA subfamily. In terms of assembly, homodimer.

It localises to the cytoplasm. It catalyses the reaction dUMP + (6R)-5,10-methylene-5,6,7,8-tetrahydrofolate = 7,8-dihydrofolate + dTMP. Its pathway is pyrimidine metabolism; dTTP biosynthesis. Functionally, catalyzes the reductive methylation of 2'-deoxyuridine-5'-monophosphate (dUMP) to 2'-deoxythymidine-5'-monophosphate (dTMP) while utilizing 5,10-methylenetetrahydrofolate (mTHF) as the methyl donor and reductant in the reaction, yielding dihydrofolate (DHF) as a by-product. This enzymatic reaction provides an intracellular de novo source of dTMP, an essential precursor for DNA biosynthesis. The polypeptide is Thymidylate synthase (Rhodopseudomonas palustris (strain BisA53)).